The primary structure comprises 530 residues: Phosphoenolpyruvate carboxykinase (ATP) (530 aa).

Residues R58, Y195, and K201 each contribute to the substrate site. ATP is bound by residues K201, H220, and G236 to T244. The Mn(2+) site is built by K201 and H220. D257 serves as a coordination point for Mn(2+). ATP is bound by residues E285, R321, R440–I441, and T446. Residue R321 participates in substrate binding.

Belongs to the phosphoenolpyruvate carboxykinase (ATP) family. Mn(2+) serves as cofactor.

It localises to the cytoplasm. The enzyme catalyses oxaloacetate + ATP = phosphoenolpyruvate + ADP + CO2. It participates in carbohydrate biosynthesis; gluconeogenesis. In terms of biological role, involved in the gluconeogenesis. Catalyzes the conversion of oxaloacetate (OAA) to phosphoenolpyruvate (PEP) through direct phosphoryl transfer between the nucleoside triphosphate and OAA. The sequence is that of Phosphoenolpyruvate carboxykinase (ATP) from Staphylococcus aureus (strain MRSA252).